Consider the following 55-residue polypeptide: Large ribosomal subunit protein uL15 (55 aa).

It belongs to the universal ribosomal protein uL15 family. As to quaternary structure, part of the 50S ribosomal subunit.

Functionally, binds to the 23S rRNA. In Lactococcus lactis subsp. cremoris (Streptococcus cremoris), this protein is Large ribosomal subunit protein uL15 (rplO).